The primary structure comprises 227 residues: A-type potassium channel modulatory protein KCNIP1 (227 aa).

The EF-hand 1; degenerate domain occupies 38-94 (LEMTMVCHRPEGLEQLEAQTNFTKRELQVLYRGFKNECPSGVVNEETFKQIYAQFFP). EF-hand domains lie at 97–132 (DAST…LLRG), 133–168 (TVHE…IYDM), and 181–216 (TPRQ…DDNI). Residues Asp-146, Asn-148, Asp-150, Tyr-152, Glu-157, Asp-194, Asn-196, Asp-198, and Glu-205 each coordinate Ca(2+). Positions 214-227 (DNIMRSLQLFQNVM) are interaction with KCND2.

Belongs to the recoverin family. As to quaternary structure, component of heteromultimeric potassium channels. Identified in potassium channel complexes containing KCND1, KCND2, KCND3, KCNIP1, KCNIP2, KCNIP3, KCNIP4, DPP6 and DPP10. Part of a heterooctamer composed of the tetrameric channel and four KCNIP1 chains. Probably part of a complex consisting of KCNIP1, KCNIP2 isoform 3 and KCND2. Self-associates to form homodimers and homotetramers. Interacts with KCNIP2 isoform 3 in a calcium-dependent manner. Interacts with KCND2; this interaction mediates the capture of both the N- and C-terminus of KCND2, thus preventing KCND2 N-type inactivation and modulates the channel gating kinetics. Interacts with KCND3; each KCNIP1 monomer interacts with two adjacent KCND3 subunits, through both the N-terminal inactivation ball of a KCND3 subunit and a C-terminal helix from the adjacent KCND3 subunit, clamping them together; this interaction stabilizes the tetrameric form and modulates the channel gating kinetics namely channel activation and inactivation kinetics and rate of recovery from inactivation. As to expression, expressed in brain. Found in a subpopulation of neurons widely distributed and enriched in Purkinje cells of the cerebellum and in the reticular thalamic and medial habenular nuclei.

The protein localises to the cell membrane. It localises to the cytoplasm. It is found in the cell projection. Its subcellular location is the dendrite. In terms of biological role, regulatory subunit of Kv4/D (Shal)-type voltage-gated rapidly inactivating A-type potassium channels. Regulates channel density, inactivation kinetics and rate of recovery from inactivation in a calcium-dependent and isoform-specific manner. Modulates KCND2/Kv4.2 currents. In vitro, modulates KCND1/Kv4.1 currents. Increases the presence of KCND2 at the cell surface. The polypeptide is A-type potassium channel modulatory protein KCNIP1 (Mus musculus (Mouse)).